A 195-amino-acid polypeptide reads, in one-letter code: Early light-induced protein 1, chloroplastic (195 aa).

The transit peptide at 1–46 directs the protein to the chloroplast; that stretch reads MATASFNMQSVFAGGLTTRKINTNKLFSAGSFPNLKRNYPVGVRCM. Residues 46–81 are disordered; the sequence is MAEGGPTNEDSSPAPSTSAAQPLPKSPSPPPPMKPK. The segment covering 56 to 68 has biased composition (low complexity); sequence SSPAPSTSAAQPL. Positions 69 to 79 are enriched in pro residues; it reads PKSPSPPPPMK. 3 helical membrane passes run 104 to 124, 131 to 151, and 175 to 195; these read LAMV…ENVL, GVSW…VPLF, and FAML…GTLV.

This sequence belongs to the ELIP/psbS family.

Its subcellular location is the plastid. The protein localises to the chloroplast thylakoid membrane. Functionally, prevents excess accumulation of free chlorophyll by inhibiting the entire chlorophyll biosynthesis pathway (e.g. 5-aminolevulinate synthesis and Mg-protoporphyrin IX chelatase activity), and hence prevent photooxidative stress. Probably involved in the integration of pigments into the mature light-harvesting pigment-protein complexes. Light-harvesting chlorophyll (LHC) a/b-binding protein required to ensure a high rate of chlorophyll accumulation during deetiolation in continuous high light. Involved in seed germination. May fulfill a photoprotective functions. The polypeptide is Early light-induced protein 1, chloroplastic (Arabidopsis thaliana (Mouse-ear cress)).